Reading from the N-terminus, the 236-residue chain is MKVIIVKDNVEGGKEGYKLFADAKKNGATTFGLATGSTPITTYQEIIKSDLDFTDSISINLDEYVGLPEDSDQSYDYFMHENLFNAKPFKHSYLPNGRAADLEAEAKHYDQIIEDNPIDLQILGIGRNGHIGFNEPGTPADSTTHKVSLTQSTIDANARFFEHEEDVPRYAISMGLASIMKSKHILIEAYGEDKADAIKGMIEGPVTTDLPASVLQNHDNVTVIIDEAAASKLSNK.

Aspartate 62 acts as the Proton acceptor; for enolization step in catalysis. The For ring-opening step role is filled by asparagine 128. Histidine 130 serves as the catalytic Proton acceptor; for ring-opening step. Glutamate 135 serves as the catalytic For ring-opening step.

It belongs to the glucosamine/galactosamine-6-phosphate isomerase family. NagB subfamily.

The catalysed reaction is alpha-D-glucosamine 6-phosphate + H2O = beta-D-fructose 6-phosphate + NH4(+). It participates in amino-sugar metabolism; N-acetylneuraminate degradation; D-fructose 6-phosphate from N-acetylneuraminate: step 5/5. Its function is as follows. Catalyzes the reversible isomerization-deamination of glucosamine 6-phosphate (GlcN6P) to form fructose 6-phosphate (Fru6P) and ammonium ion. This chain is Glucosamine-6-phosphate deaminase, found in Pediococcus pentosaceus (strain ATCC 25745 / CCUG 21536 / LMG 10740 / 183-1w).